Reading from the N-terminus, the 206-residue chain is Small ribosomal subunit protein uS4 (206 aa).

Positions 96–160 (CRLDNVVYRM…AQLRIVQALE (65 aa)) constitute an S4 RNA-binding domain.

The protein belongs to the universal ribosomal protein uS4 family. Part of the 30S ribosomal subunit. Contacts protein S5. The interaction surface between S4 and S5 is involved in control of translational fidelity.

In terms of biological role, one of the primary rRNA binding proteins, it binds directly to 16S rRNA where it nucleates assembly of the body of the 30S subunit. With S5 and S12 plays an important role in translational accuracy. The protein is Small ribosomal subunit protein uS4 of Pseudomonas putida (strain GB-1).